The primary structure comprises 508 residues: Matrix metalloproteinase-19 (508 aa).

The signal sequence occupies residues 1-18 (MNCQQLWLGFLLPMTVSG). Residues 19 to 97 (RVLGLAEVAP…EDPFNQKTLK (79 aa)) constitute a propeptide that is removed on maturation. The Cysteine switch signature appears at 83–90 (PRCGLEDP). The Zn(2+) site is built by cysteine 85 and histidine 212. Glutamate 213 is an active-site residue. 2 residues coordinate Zn(2+): histidine 216 and histidine 222. The disordered stretch occupies residues 262–288 (IRDEEEEETELPTVPPVPTEPSPMPDP). Positions 274-287 (TVPPVPTEPSPMPD) are enriched in pro residues. Hemopexin repeat units lie at residues 286-333 (PDPC…WEGL), 334-380 (PGNL…EPNL), 381-425 (DAAL…FTGV), and 426-472 (PNQP…WMHC). The cysteines at positions 289 and 472 are disulfide-linked. An N-linked (GlcNAc...) asparagine glycan is attached at asparagine 464.

The protein belongs to the peptidase M10A family. Zn(2+) serves as cofactor. Ca(2+) is required as a cofactor. In terms of processing, activated by autolytic cleavage after Lys-97. Tyrosine phosphorylated by PKDCC/VLK. Expressed in mammary gland, placenta, lung, pancreas, ovary, small intestine, spleen, thymus, prostate, testis colon, heart and blood vessel walls. Not detected in brain and peripheral blood leukocytes. Also expressed in the synovial fluid of normal and rheumatoid patients.

Its subcellular location is the secreted. It localises to the extracellular space. The protein localises to the extracellular matrix. Its activity is regulated as follows. Strongly inhibited by TIMP-2, TIMP-3 and TIMP-4, while TIMP-1 is less efficient. In terms of biological role, endopeptidase that degrades various components of the extracellular matrix, such as aggrecan and cartilage oligomeric matrix protein (comp), during development, haemostasis and pathological conditions (arthritic disease). May also play a role in neovascularization or angiogenesis. Hydrolyzes collagen type IV, laminin, nidogen, nascin-C isoform, fibronectin, and type I gelatin. In Homo sapiens (Human), this protein is Matrix metalloproteinase-19 (MMP19).